We begin with the raw amino-acid sequence, 104 residues long: 2,4-dinitrotoluene dioxygenase system, ferredoxin component (104 aa).

Positions 1–21 (MSENWIDAAARDEVPRGRRDR) are disordered. Positions 5-101 (WIDAAARDEV…VKIENMRVML (97 aa)) constitute a Rieske domain. Positions 45, 47, 64, and 67 each coordinate [2Fe-2S] cluster.

The protein belongs to the bacterial ring-hydroxylating dioxygenase ferredoxin component family. As to quaternary structure, the 2,4-dinitrotoluene dioxygenase (DNTDO) multicomponent enzyme system is composed of an electron transfer component and a dioxygenase component (iron sulfur protein (ISP)). The electron transfer component is composed of a ferredoxin reductase (DntAa) and a ferredoxin (DntAb), and the dioxygenase component is formed of a large alpha subunit (DntAc) and a small beta subunit (DntAd). [2Fe-2S] cluster is required as a cofactor.

Its function is as follows. Component of the 2,4-dinitrotoluene dioxygenase (DNTDO) multicomponent enzyme system which catalyzes the incorporation of both atoms of molecular oxygen into 2,4-dinitrotoluene (DNT) to form 4-methyl-5-nitrocatechol (MNC) and nitrite. Functions as an intermediate electron transfer protein via a specific interaction with iron sulfur protein components (ISP)(DntAc and DntAd). Also able to convert naphthalene to cis-(1R,2S)-dihydroxy-1,2-dihydronaphthalene. In Burkholderia sp. (strain RASC), this protein is 2,4-dinitrotoluene dioxygenase system, ferredoxin component.